The sequence spans 318 residues: Putative 2-hydroxyacid dehydrogenase SH0752 (318 aa).

NAD(+)-binding positions include 155 to 156 (EI), 234 to 236 (AGR), and Asp-260. Residue Arg-236 is part of the active site. Residue Glu-265 is part of the active site. His-283 acts as the Proton donor in catalysis. 283–286 (HIGN) is an NAD(+) binding site.

The protein belongs to the D-isomer specific 2-hydroxyacid dehydrogenase family.

The chain is Putative 2-hydroxyacid dehydrogenase SH0752 from Staphylococcus haemolyticus (strain JCSC1435).